A 658-amino-acid chain; its full sequence is UvrABC system protein B (658 aa).

One can recognise a Helicase ATP-binding domain in the interval 25-178 (KSLKNNNHYQ…KNFLLKLVEM (154 aa)). An ATP-binding site is contributed by 38–45 (GVTGSGKT). Residues 91–114 (HFDYYQPESYIPRRDLFIEKDSSI) carry the Beta-hairpin motif. The 175-residue stretch at 433–607 (QVQDLFDEIK…ELKLRDDEIR (175 aa)) folds into the Helicase C-terminal domain. The region spanning 623–658 (EKIIKELDKKMRECAKNLDFEEAMRLRDEIAKLRTL) is the UVR domain.

It belongs to the UvrB family. Forms a heterotetramer with UvrA during the search for lesions. Interacts with UvrC in an incision complex.

The protein resides in the cytoplasm. In terms of biological role, the UvrABC repair system catalyzes the recognition and processing of DNA lesions. A damage recognition complex composed of 2 UvrA and 2 UvrB subunits scans DNA for abnormalities. Upon binding of the UvrA(2)B(2) complex to a putative damaged site, the DNA wraps around one UvrB monomer. DNA wrap is dependent on ATP binding by UvrB and probably causes local melting of the DNA helix, facilitating insertion of UvrB beta-hairpin between the DNA strands. Then UvrB probes one DNA strand for the presence of a lesion. If a lesion is found the UvrA subunits dissociate and the UvrB-DNA preincision complex is formed. This complex is subsequently bound by UvrC and the second UvrB is released. If no lesion is found, the DNA wraps around the other UvrB subunit that will check the other stand for damage. This chain is UvrABC system protein B, found in Helicobacter pylori (strain HPAG1).